A 238-amino-acid polypeptide reads, in one-letter code: Orotidine 5'-phosphate decarboxylase (238 aa).

Residues Asp10, Lys32, 59–68, Thr122, Arg184, Gln193, Gly213, and Arg214 contribute to the substrate site; that span reads DLKLHDIPNT. Lys61 serves as the catalytic Proton donor.

Belongs to the OMP decarboxylase family. Type 1 subfamily. As to quaternary structure, homodimer.

The catalysed reaction is orotidine 5'-phosphate + H(+) = UMP + CO2. Its pathway is pyrimidine metabolism; UMP biosynthesis via de novo pathway; UMP from orotate: step 2/2. Its function is as follows. Catalyzes the decarboxylation of orotidine 5'-monophosphate (OMP) to uridine 5'-monophosphate (UMP). The sequence is that of Orotidine 5'-phosphate decarboxylase from Bacillus thuringiensis subsp. konkukian (strain 97-27).